Reading from the N-terminus, the 102-residue chain is Envelope glycoprotein N (102 aa).

The signal sequence occupies residues 1-32 (MGKVLRKPFAKAVPLLFLAATWLLTGVLPAGA). Topologically, residues 33 to 69 (SSPTNAAAASLTEAQDQFYSYTCNADTFSPSLTSFAS) are virion surface. Residues 70–90 (IWALLTLVLVIIASAIYLMYV) traverse the membrane as a helical segment. Residues 91–102 (CFNKFVNTLLTD) are Intravirion-facing.

This sequence belongs to the herpesviridae glycoprotein N family. In terms of assembly, interacts (via N-terminus) with gM (via N-terminus). The gM-gN heterodimer forms the gCII complex. O-glycosylated. Contains alpha 2,6-sialic acid residues.

It is found in the virion membrane. The protein localises to the host membrane. The protein resides in the host Golgi apparatus. Its subcellular location is the host trans-Golgi network. Its function is as follows. Envelope glycoprotein necessary for proper maturation of gM and modulation of its membrane fusion activity. Also plays a critical role in virion morphogenesis. This chain is Envelope glycoprotein N, found in Epstein-Barr virus (strain AG876) (HHV-4).